The primary structure comprises 517 residues: Crotonobetaine/carnitine--CoA ligase (517 aa).

Belongs to the ATP-dependent AMP-binding enzyme family.

The enzyme catalyses 4-(trimethylamino)butanoate + ATP + CoA = 4-(trimethylamino)butanoyl-CoA + AMP + diphosphate. It catalyses the reaction crotonobetaine + ATP + CoA = crotonobetainyl-CoA + AMP + diphosphate. The catalysed reaction is (R)-carnitine + ATP + CoA = (R)-carnitinyl-CoA + AMP + diphosphate. The protein operates within amine and polyamine metabolism; carnitine metabolism. Functionally, catalyzes the transfer of CoA to carnitine, generating the initial carnitinyl-CoA needed for the CaiB reaction cycle. Also has activity toward crotonobetaine and gamma-butyrobetaine. The polypeptide is Crotonobetaine/carnitine--CoA ligase (Escherichia coli O139:H28 (strain E24377A / ETEC)).